Reading from the N-terminus, the 69-residue chain is Nodulin-3 (69 aa).

Positions 1–24 are cleaved as a signal peptide; that stretch reads MAKILKFVFAIILFFSLFLLSMEA.

This is Nodulin-3 (ENOD3) from Pisum sativum (Garden pea).